The following is a 415-amino-acid chain: Serine hydroxymethyltransferase 1 (415 aa).

(6S)-5,6,7,8-tetrahydrofolate contacts are provided by residues Leu-122 and 126–128 (GHL). Lys-230 is modified (N6-(pyridoxal phosphate)lysine).

The protein belongs to the SHMT family. In terms of assembly, homodimer. Pyridoxal 5'-phosphate is required as a cofactor.

The protein localises to the cytoplasm. It catalyses the reaction (6R)-5,10-methylene-5,6,7,8-tetrahydrofolate + glycine + H2O = (6S)-5,6,7,8-tetrahydrofolate + L-serine. Its pathway is one-carbon metabolism; tetrahydrofolate interconversion. The protein operates within amino-acid biosynthesis; glycine biosynthesis; glycine from L-serine: step 1/1. Catalyzes the reversible interconversion of serine and glycine with tetrahydrofolate (THF) serving as the one-carbon carrier. This reaction serves as the major source of one-carbon groups required for the biosynthesis of purines, thymidylate, methionine, and other important biomolecules. Also exhibits THF-independent aldolase activity toward beta-hydroxyamino acids, producing glycine and aldehydes, via a retro-aldol mechanism. This is Serine hydroxymethyltransferase 1 from Burkholderia mallei (strain ATCC 23344).